The primary structure comprises 410 residues: MYQSMNLSVSSNFTHRSLLESRFPIFSTGFRKSVNLKPPRVSSGPESNDSGHETLTDKLIHLLRAVPDWADEIKERGMQQKRSLYTHEKWVEHRSSLRHVRHLLSSFSSRVILSLIPPVFFFTSVAVVIASYNSAVALDWLPGIFPILRSSSLPYQLTAPALALLLVFRTEASYSRYEEGRKAWVGIIAGTNDLARQVICSVDSSGDELIIKDLLLRYIAAFPVALKCHVIYGSDIARDLRNLIEADDLSLILQAKHRPRCVIEFISQSIQLLKLDDAKRDLLESKMLHLHEGIGVCEQLMGIPIPLSYTRLTSRFLVFWHLTLPIILWDECHWIVVPATFISAASLFCIEEVGVLIEEPFPMLALDELCDLVHSNIQEAVKSEKVIRNRIIAKIKLHEFKHSSNGRHRS.

The Lumenal, thylakoid portion of the chain corresponds to 1–110 (MYQSMNLSVS…RHLLSSFSSR (110 aa)). Residues 111–131 (VILSLIPPVFFFTSVAVVIAS) traverse the membrane as a helical segment. The Stromal portion of the chain corresponds to 132-147 (YNSAVALDWLPGIFPI). Residues 148 to 168 (LRSSSLPYQLTAPALALLLVF) form a helical membrane-spanning segment. At 169-315 (RTEASYSRYE…PLSYTRLTSR (147 aa)) the chain is on the lumenal, thylakoid side. The next 2 helical transmembrane spans lie at 316–336 (FLVF…HWIV) and 337–357 (VPAT…GVLI). Residues 358-410 (EEPFPMLALDELCDLVHSNIQEAVKSEKVIRNRIIAKIKLHEFKHSSNGRHRS) are Lumenal, thylakoid-facing.

This sequence belongs to the anion channel-forming bestrophin (TC 1.A.46) family. Voltage-dependent chloride channel subfamily. Mostly expressed in flowers and leaves and, to a lower extent, in stems and roots.

It localises to the plastid. It is found in the chloroplast thylakoid membrane. It carries out the reaction chloride(in) = chloride(out). With respect to regulation, more active at positive than at negative voltages. Repressed by the general anion channel inhibitors dithiocyanatostilbene-2,20-disulphonic acid (DIDS) and niflumic acid. Voltage-dependent chloride (Cl) channel critical for proton motive force (PMF) partitioning across the thylakoid membrane by anion influx into the lumen during illumination, thus being required for photoprotection under fluctuating light conditions. Influences thylakoid ultrastructure, including lumen size and organization. During photosynthetic response on transition from dark to low light, involved in a sequential mechanism of adaptation; VCCN1 and CLCe first trigger the activation of photoprotection, which is later down-regulated by KEA3 to a low steady state, while adjusting electron transport. On transition from low to high light, accelerates the activation of photoprotection by building up a pH gradient across the thylakoid membrane. In Arabidopsis thaliana (Mouse-ear cress), this protein is Voltage-dependent chloride channel 1, chloroplastic.